We begin with the raw amino-acid sequence, 193 residues long: Potassium-transporting ATPase KdpC subunit (193 aa).

The chain crosses the membrane as a helical span at residues 7 to 27; that stretch reads PLVVLFVILTAVTGLAYPAVM.

The protein belongs to the KdpC family. As to quaternary structure, the system is composed of three essential subunits: KdpA, KdpB and KdpC.

The protein localises to the cell inner membrane. In terms of biological role, part of the high-affinity ATP-driven potassium transport (or Kdp) system, which catalyzes the hydrolysis of ATP coupled with the electrogenic transport of potassium into the cytoplasm. This subunit acts as a catalytic chaperone that increases the ATP-binding affinity of the ATP-hydrolyzing subunit KdpB by the formation of a transient KdpB/KdpC/ATP ternary complex. The chain is Potassium-transporting ATPase KdpC subunit from Burkholderia cenocepacia (strain ATCC BAA-245 / DSM 16553 / LMG 16656 / NCTC 13227 / J2315 / CF5610) (Burkholderia cepacia (strain J2315)).